Reading from the N-terminus, the 310-residue chain is 26S proteasome non-ATPase regulatory subunit 7 homolog B (310 aa).

M1 is modified (N-acetylmethionine). An MPN domain is found at 17 to 154 (VIVHPLVLLS…YYAVEEVKEN (138 aa)).

Belongs to the peptidase M67A family. As to quaternary structure, component of the 19S regulatory particle (RP/PA700) lid subcomplex of the 26S proteasome. The 26S proteasome is composed of a core protease (CP), known as the 20S proteasome, capped at one or both ends by the 19S regulatory particle (RP/PA700). The RP/PA700 complex is composed of at least 17 different subunits in two subcomplexes, the base and the lid, which form the portions proximal and distal to the 20S proteolytic core, respectively.

Its function is as follows. Acts as a regulatory subunit of the 26S proteasome which is involved in the ATP-dependent degradation of ubiquitinated proteins. The polypeptide is 26S proteasome non-ATPase regulatory subunit 7 homolog B (RPN8B) (Arabidopsis thaliana (Mouse-ear cress)).